A 305-amino-acid polypeptide reads, in one-letter code: Olfactory receptor 4F5 (305 aa).

Residues Met-1–Thr-18 are Extracellular-facing. Residues Phe-19–Val-42 form a helical membrane-spanning segment. The Cytoplasmic segment spans residues Val-43–Ser-50. A helical membrane pass occupies residues Pro-51–Pro-72. The Extracellular portion of the chain corresponds to Lys-73–Gln-93. An intrachain disulfide couples Cys-90 to Cys-182. A helical membrane pass occupies residues Ile-94–Phe-113. At Asp-114 to Asn-132 the chain is on the cytoplasmic side. The chain crosses the membrane as a helical span at residues Ala-133–Ser-151. The Extracellular portion of the chain corresponds to Gln-152 to Leu-188. A helical membrane pass occupies residues Asp-189–Thr-212. Residues Ile-213 to Lys-228 lie on the Cytoplasmic side of the membrane. Residues Ala-229–Tyr-251 traverse the membrane as a helical segment. Over Ala-252–Lys-262 the chain is Extracellular. The helical transmembrane segment at Phe-263–Leu-282 threads the bilayer. Topologically, residues Arg-283–Phe-305 are cytoplasmic.

Belongs to the G-protein coupled receptor 1 family.

The protein resides in the cell membrane. Its function is as follows. Odorant receptor. The chain is Olfactory receptor 4F5 (OR4F5) from Homo sapiens (Human).